A 545-amino-acid polypeptide reads, in one-letter code: Chaperonin GroEL 1 (545 aa).

ATP contacts are provided by residues 30 to 33 (TLGP), K51, 87 to 91 (DGTTT), G415, and D495.

This sequence belongs to the chaperonin (HSP60) family. Forms a cylinder of 14 subunits composed of two heptameric rings stacked back-to-back. Interacts with the co-chaperonin GroES.

It localises to the cytoplasm. It carries out the reaction ATP + H2O + a folded polypeptide = ADP + phosphate + an unfolded polypeptide.. Its function is as follows. Together with its co-chaperonin GroES, plays an essential role in assisting protein folding. The GroEL-GroES system forms a nano-cage that allows encapsulation of the non-native substrate proteins and provides a physical environment optimized to promote and accelerate protein folding. The polypeptide is Chaperonin GroEL 1 (Rhizobium meliloti (strain 1021) (Ensifer meliloti)).